A 2116-amino-acid polypeptide reads, in one-letter code: Non-structural polyprotein p200 (2116 aa).

The tract at residues 36–49 (EVRDVVTAAQKRAI) is required for efficient proteolysis and P150-P90 interaction. The region spanning 57–247 (VFTQMQVSDH…TRPCTTRIYQ (191 aa)) is the Alphavirus-like MT domain. Residues 715-779 (GQLAATSPPP…PVPPTTAEPA (65 aa)) are disordered. Composition is skewed to pro residues over residues 721–730 (SPPPGDPPPP) and 745–775 (TPPP…PPTT). Short sequence motifs (pxxPxR; class II SH3-binding) lie at residues 727–732 (PPPPRR), 747–752 (PPAPVR), and 761–766 (PPAPPR). A Macro domain is found at 806–985 (SDIVESYARA…LTHASVLVGA (180 aa)). A disordered region spans residues 992-1031 (VSPPPTEPLASCPAGDPGRPAQRSASPPATPLGDATAPEP). In terms of domain architecture, Peptidase C27 spans 1000–1301 (LASCPAGDPG…WLAVPLSRGG (302 aa)). Catalysis depends on Cys1152, which acts as the For cysteine protease activity. An interaction with host CALM1 region spans residues 1152–1183 (CWLRAAANVAQAARACGAYTSAGCPKCAYGRA). Zn(2+)-binding residues include Cys1175, Cys1178, Cys1227, and His1273. The interval 1193 to 1228 (FAALSQWWSASHADASPDGTGDPLDPLMETVGCACS) is EF-hand-like. His1273 serves as the catalytic For cysteine protease activity. The (+)RNA virus helicase ATP-binding domain maps to 1320–1468 (EVRRLGDDAM…VPDRWPTGRS (149 aa)). 1352-1359 (MAAGAGKT) is a binding site for a ribonucleoside 5'-triphosphate. The region spanning 1469-1609 (RHTWRFPDCW…ELKEVPAGID (141 aa)) is the (+)RNA virus helicase C-terminal domain. The segment at 1700–1900 (YRAGEDGSTL…VELEISAALL (201 aa)) is involved in P150-P90 interaction. The RdRp catalytic domain maps to 1870–1981 (TNAIEVDFTE…FLPEGARNAA (112 aa)). A Human RB1 binding motif is present at residues 1902–1906 (LPCAE).

Interacts with RNA-directed RNA polymerase p90. Interacts with host CALM1; this interaction is necessary for the protease activity and viral infectivity. Interacts with host C1QBP. Interacts with the capsid protein. In terms of assembly, interacts with human RB1/retinoblastoma protein. Interacts with protease/methyltransferase p150. The cofactor is Zn(2+). In terms of processing, specific enzymatic cleavage by its own cysteine protease yield mature proteins p150 and p90.

The protein localises to the host membrane. The protein resides in the host cytoplasm. It localises to the host perinuclear region. It catalyses the reaction RNA(n) + a ribonucleoside 5'-triphosphate = RNA(n+1) + diphosphate. The catalysed reaction is a ribonucleoside 5'-triphosphate + H2O = a ribonucleoside 5'-diphosphate + phosphate + H(+). It carries out the reaction ATP + H2O = ADP + phosphate + H(+). Functionally, probable principal replicase for the negative-strand DNA, which replicates the 40S (+) genomic RNA into (-) antigenomic RNA. It cannot replicate the (-) into (+) until cleaved into p150 and p90 mature proteins. Its function is as follows. Protease that cleaves the precursor polyprotein into two mature products. Together with RNA-directed RNA polymerase p90, replicates the 40S genomic and antigenomic RNA by recognizing replications specific signals. The heterodimer P150/p90 is probably the principal replicase for positive-strand genomic RNA and the 24S subgenomic RNA, which codes for structural proteins. Responsible for the mRNA-capping of the viral mRNAs. This function is necessary since all viral RNAs are synthesized in the cytoplasm, and host capping enzymes are restricted to the nucleus. Forms fibers late in the infection that may be involved in cell-to-cell spread of the virus RNA in the absence of virus particle formation. In terms of biological role, together with protease/methyltransferase p150, replicates the 40S genomic and antigenomic RNA by recognizing replications specific signals. The heterodimer P150/p90 is probably the principal replicase for positive-strand genomic RNA and the 24S subgenomic RNA, which codes for structural proteins. A helicase activity is probably also present. The chain is Non-structural polyprotein p200 from Rubella virus (strain M33) (RUBV).